Consider the following 239-residue polypeptide: Increased recombination centers protein 22-2 (239 aa).

The first 19 residues, 1-19 (MKLSTIFTAFAATIATVAG), serve as a signal peptide directing secretion. The Lumenal segment spans residues 20-161 (YETTGSKQTV…AAVSFFDPRL (142 aa)). Residues 162 to 182 (IFLELVLLITFAGLIYVGYEI) form a helical membrane-spanning segment. The Cytoplasmic segment spans residues 183-239 (WGKQYFKGVAPVKAKKVSAAKASSPVATGPSTTSATGYDTNWIPESHLKQKKTKKVN). Residues 202 to 222 (AKASSPVATGPSTTSATGYDT) are disordered. Residues 211–221 (GPSTTSATGYD) show a composition bias toward polar residues.

The protein belongs to the IRC22 family.

It localises to the endoplasmic reticulum membrane. Functionally, is probably involved in a pathway contributing to genomic integrity. This chain is Increased recombination centers protein 22-2 (IRC22-2), found in Candida albicans (strain SC5314 / ATCC MYA-2876) (Yeast).